Here is a 449-residue protein sequence, read N- to C-terminus: Exodeoxyribonuclease 7 large subunit (449 aa).

It belongs to the XseA family. In terms of assembly, heterooligomer composed of large and small subunits.

Its subcellular location is the cytoplasm. It carries out the reaction Exonucleolytic cleavage in either 5'- to 3'- or 3'- to 5'-direction to yield nucleoside 5'-phosphates.. Functionally, bidirectionally degrades single-stranded DNA into large acid-insoluble oligonucleotides, which are then degraded further into small acid-soluble oligonucleotides. This chain is Exodeoxyribonuclease 7 large subunit, found in Salmonella paratyphi A (strain ATCC 9150 / SARB42).